The primary structure comprises 505 residues: MLFLNAKFIDLDLGENAVIVNEEDLKGTSYYPQDRVLIESHAGSVIGNIYSTKTMVNKGEVGMLVSELAEISISEGEEVKLRHAEKPESIPFIKKKMDGQVLNPHEIRTIIDEIVSKKLSNIELSAFVSSTYINGMNMDEISEMTKRIAETGDMIAWEKSLVVDIHSIGGVPGNKYALLSIPILAAAGITVPKTSSRAITSPAGTADVMEVLTNVELKEEEIKRIVKTTNGCLAWGGGVNLAPADDIIINVERPVSIDPQPQLLASVMAKKIATGIKYTVIDIPVGKGVKIKNEAEGAKLARKFIELGESLNIKVECVLTYGGQPLGRAIGPALEAREAIEALQDPKNAPKSLIEKALSLAGILLELGGAAQIGEGQNLAWEILESGKALEKFNQIITEQGGTPKKPEEIELGDYVEEILAPIDGYITDISNTAITNVVKEAGAPRDKKAGILLNSKIGNKVKQGDVLYTIYSGSEERLVSAINLARRVYPVKVEGMLIERISKF.

AMP is bound by residues Gly-170, 196–201 (SRAITS), and Thr-205. Asp-258 serves as the catalytic Proton donor. Residues Ser-266 and Lys-290 each coordinate AMP.

It belongs to the thymidine/pyrimidine-nucleoside phosphorylase family. Type 2 subfamily.

It catalyses the reaction AMP + phosphate = alpha-D-ribose 1,5-bisphosphate + adenine. It carries out the reaction CMP + phosphate = cytosine + alpha-D-ribose 1,5-bisphosphate. The enzyme catalyses UMP + phosphate = alpha-D-ribose 1,5-bisphosphate + uracil. Functionally, catalyzes the conversion of AMP and phosphate to adenine and ribose 1,5-bisphosphate (R15P). Exhibits phosphorylase activity toward CMP and UMP in addition to AMP. Functions in an archaeal AMP degradation pathway, together with R15P isomerase and RubisCO. The sequence is that of AMP phosphorylase from Methanococcus maripaludis (strain C5 / ATCC BAA-1333).